Reading from the N-terminus, the 1175-residue chain is Tudor domain-containing protein 1 (1175 aa).

Residues 1 to 32 are disordered; sequence MNPAFAQPMMRPNLPLRRPATGPSSLSPRGPA. Positions 8–19 are enriched in low complexity; it reads PMMRPNLPLRRP. Positions 83, 86, 94, 97, 103, 107, 115, and 119 each coordinate Zn(2+). The segment at 83-119 adopts an MYND-type zinc-finger fold; it reads CNYCSHQGNLRCTRCKKTCYCSVACQTQDWIAHRHVC. Tudor domains follow at residues 222–282, 453–512, and 674–733; these read KPEV…IDAV, RPAP…LLAL, and TPIV…LLKL. Positions 827–852 are disordered; sequence PSLKPIDQNPSVEEPLKVSSKGAATT. One can recognise a Tudor 4 domain in the interval 925–983; sequence HPLPGASCCAQFSGDKNWYRAVVLEVTTKHAHVIYSDYGNMETVPLSSILPITKELLQH. Disordered stretches follow at residues 1060–1089 and 1115–1136; these read PSSK…NKAV and HEEP…TPDT. The span at 1078–1089 shows a compositional bias: polar residues; that stretch reads KQTQPISSNKAV. Positions 1115-1128 are enriched in basic and acidic residues; it reads HEEPENMSKTKTAE.

The protein belongs to the TDRD1 family.

It is found in the cytoplasm. In terms of biological role, plays a central role during spermatogenesis by participating in the repression transposable elements and preventing their mobilization, which is essential for the germline integrity. Acts via the piRNA metabolic process, which mediates the repression of transposable elements during meiosis by forming complexes composed of piRNAs and Piwi proteins and governs the methylation and subsequent repression of transposons. Required for the localization of Piwi proteins to the meiotic nuage. Involved in the piRNA metabolic process by ensuring the entry of correct transcripts into the normal piRNA pool and limiting the entry of cellular transcripts into the piRNA pathway. May act by allowing the recruitment of piRNA biogenesis or loading factors that ensure the correct entry of transcripts and piRNAs into Piwi proteins. This is Tudor domain-containing protein 1 (tdrd1) from Danio rerio (Zebrafish).